We begin with the raw amino-acid sequence, 117 residues long: UPF0251 protein DET0218 (117 aa).

This sequence belongs to the UPF0251 family.

The protein is UPF0251 protein DET0218 of Dehalococcoides mccartyi (strain ATCC BAA-2266 / KCTC 15142 / 195) (Dehalococcoides ethenogenes (strain 195)).